The following is a 481-amino-acid chain: MHITKPHAAMFSSPGMGHVLPVIELAKRLSANHGFHVTVFVLETDAASVQSKLLNSTGVDIVNLPSPDISGLVDPNAHVVTKIGVIMREAVPTLRSKIVAMHQNPTALIIDLFGTDALCLAAELNMLTYVFIASNARYLGVSIYYPTLDEVIKEEHTVQRKPLTIPGCEPVRFEDIMDAYLVPDEPVYHDLVRHCLAYPKADGILVNTWEEMEPKSLKSLQDPKLLGRVARVPVYPVGPLCRPIQSSTTDHPVFDWLNKQPNESVLYISFGSGGSLTAQQLTELAWGLEESQQRFIWVVRPPVDGSSCSDYFSAKGGVTKDNTPEYLPEGFVTRTCDRGFMIPSWAPQAEILAHQAVGGFLTHCGWSSTLESVLCGVPMIAWPLFAEQNMNAALLSDELGISVRVDDPKEAISRSKIEAMVRKVMAEDEGEEMRRKVKKLRDTAEMSLSIHGGGSAHESLCRVTKECQRFLECVGDLGRGA.

Residue His-18 is the Proton acceptor of the active site. Residue His-18 coordinates an anthocyanidin. Asp-111 serves as the catalytic Charge relay. UDP-alpha-D-glucose is bound by residues Ala-346, Gln-348, His-363, Trp-366, Ser-368, and Glu-371. Position 386 (Ala-386) interacts with an anthocyanidin. UDP-alpha-D-glucose-binding residues include Glu-387 and Gln-388.

This sequence belongs to the UDP-glycosyltransferase family. As to expression, expressed in seedlings and roots, and at lower levels in flowers and siliques.

The catalysed reaction is (E)-4-coumarate + UDP-alpha-D-glucose = 4-O-(beta-D-glucosyl)-trans-4-coumarate + UDP + H(+). It catalyses the reaction (E)-sinapyl alcohol + UDP-alpha-D-glucose = 4-O-(beta-D-glucosyl)-trans-4-sinapoyl alcohol + UDP + H(+). It carries out the reaction (E)-coniferol + UDP-alpha-D-glucose = 4-O-(beta-D-glucosyl)-(E)-coniferol + UDP + H(+). The enzyme catalyses (E)-sinapate + UDP-alpha-D-glucose = 4-O-(beta-D-glucosyl)-trans-sinapate + UDP + H(+). The catalysed reaction is (E)-coniferaldehyde + UDP-alpha-D-glucose = 4-O-(beta-D-glucosyl)-4-(E)-coniferyl aldehyde + UDP + H(+). It catalyses the reaction (E)-sinapaldehyde + UDP-alpha-D-glucose = 4-O-(beta-D-glucosyl)-4-trans-sinapoyl aldehyde + UDP + H(+). Functionally, involved in the O-glucosylation of monolignols (alcohol monomers of lignin). Glucosylates coniferyl alcohol to form coniferyl alcohol 4-O-glucoside. Glucosylates sinapyl alcohol to form sinapyl alcohol 4-O-glucoside. Possesses low activity with sinapate as substrate. The polypeptide is UDP-glycosyltransferase 72E3 (Arabidopsis thaliana (Mouse-ear cress)).